A 245-amino-acid polypeptide reads, in one-letter code: MNLRAFLLSAVAALVAVQAEVTYIDHDTVKPFPQPKPKTDSEKAAVKYKPQLLVSYGCHPYPAVQADGSVSAGLKGTGPAAGECGGSALGSQVYSRSDWYKDKWAIMYSWYLPKGRPAKYQRRHLWETAVVWIDDPSLANSTILGVSLNYGWRHKTMAPIESEFLDDSRVKLESYRGFSYPRPKLRFTTHVGETQDLITWEQLTVEAREALSNAEFDSGLIKTTRREMPLKDGVFEKRLKDAWPF.

Positions 1–19 (MNLRAFLLSAVAALVAVQA) are cleaved as a signal peptide. The short motif at 121–127 (QRRHLWE) is the Hepta-peptide GHRHDWE motif element. Residue asparagine 140 is glycosylated (N-linked (GlcNAc...) asparagine).

Belongs to the Necrosis inducing protein (NPP1) family.

It is found in the secreted. Its function is as follows. Secreted effector that contributes strongly to virulence during infection by P.capsici. The chain is NLP effector protein Pc118551 from Phytophthora capsici.